Here is a 407-residue protein sequence, read N- to C-terminus: Transcriptional regulator UL34 (407 aa).

The disordered stretch occupies residues 268-330 (AAGPPEADEN…ENEEEEEELF (63 aa)). The segment covering 273–286 (EADENNDEGEEDDD) has biased composition (acidic residues). The span at 287-301 (ELRHSDPAPLHDSKK) shows a compositional bias: basic and acidic residues. Residues 302–312 (PRNARRPRTRV) show a composition bias toward basic residues.

The protein belongs to the HHV-5 UL34 protein family.

It localises to the host nucleus. Acts as a transcriptional repressor of the US3 gene expression through a specific DNA sequence named the transcriptional repressive element (tre). The sequence is that of Transcriptional regulator UL34 (UL34) from Homo sapiens (Human).